A 104-amino-acid polypeptide reads, in one-letter code: uncharacterized protein (104 aa).

This is an uncharacterized protein from Haemophilus influenzae (strain ATCC 51907 / DSM 11121 / KW20 / Rd).